We begin with the raw amino-acid sequence, 582 residues long: Inactive metallocarboxypeptidase ECM14 (582 aa).

A signal peptide spans 1-20; that stretch reads MHILQVITGATLVSVPFVSA. A propeptide spanning residues 21–172 is cleaved from the precursor; the sequence is IPSSTSEFLP…QAVYESYPQP (152 aa). Residues 200–522 enclose the Peptidase M14 domain; that stretch reads DYQPLSVIIP…NAVLVFGQFL (323 aa). Zn(2+)-binding residues include His-265 and Glu-268. Substrate contacts are provided by residues 265–268, Arg-323, and 340–341; these read HARE and DR. Cys-334 and Cys-357 are oxidised to a cystine. N-linked (GlcNAc...) asparagine glycans are attached at residues Asn-381 and Asn-387. Residue His-397 coordinates Zn(2+). 398 to 399 provides a ligand contact to substrate; the sequence is SY. The span at 561–571 shows a compositional bias: acidic residues; it reads SNQLEDDDNEN. Positions 561 to 582 are disordered; that stretch reads SNQLEDDDNENDTLLGFRTQKV. A glycan (N-linked (GlcNAc...) asparagine) is linked at Asn-571.

This sequence belongs to the peptidase M14 family. The cofactor is Zn(2+).

The protein resides in the vacuole. The protein localises to the secreted. Functionally, inactive carboxypeptidase that may play a role in cell wall organization and biogenesis. The sequence is that of Inactive metallocarboxypeptidase ECM14 (ECM14) from Coccidioides posadasii (strain RMSCC 757 / Silveira) (Valley fever fungus).